We begin with the raw amino-acid sequence, 404 residues long: Probable protein phosphatase 1N (404 aa).

In terms of domain architecture, PPM-type phosphatase spans 59 to 319 (RFGASAVQGW…DNMTCMVVCF (261 aa)). Residues Asp-96, Gly-97, Asp-267, and Asp-310 each coordinate Mn(2+).

Belongs to the PP2C family. It depends on Mg(2+) as a cofactor. Mn(2+) serves as cofactor.

The enzyme catalyses O-phospho-L-seryl-[protein] + H2O = L-seryl-[protein] + phosphate. The catalysed reaction is O-phospho-L-threonyl-[protein] + H2O = L-threonyl-[protein] + phosphate. This chain is Probable protein phosphatase 1N (Ppm1n), found in Mus musculus (Mouse).